A 379-amino-acid polypeptide reads, in one-letter code: Putative glutamate--cysteine ligase 2 (379 aa).

Belongs to the glutamate--cysteine ligase type 2 family. YbdK subfamily.

The enzyme catalyses L-cysteine + L-glutamate + ATP = gamma-L-glutamyl-L-cysteine + ADP + phosphate + H(+). ATP-dependent carboxylate-amine ligase which exhibits weak glutamate--cysteine ligase activity. In Roseiflexus castenholzii (strain DSM 13941 / HLO8), this protein is Putative glutamate--cysteine ligase 2.